A 448-amino-acid polypeptide reads, in one-letter code: Beta-glucosidase A (448 aa).

The Proton donor role is filled by Glu166. The active-site Nucleophile is Glu355.

This sequence belongs to the glycosyl hydrolase 1 family.

The catalysed reaction is Hydrolysis of terminal, non-reducing beta-D-glucosyl residues with release of beta-D-glucose.. Its pathway is glycan metabolism; cellulose degradation. The protein is Beta-glucosidase A (bglA) of Acetivibrio thermocellus (strain ATCC 27405 / DSM 1237 / JCM 9322 / NBRC 103400 / NCIMB 10682 / NRRL B-4536 / VPI 7372) (Clostridium thermocellum).